Reading from the N-terminus, the 616-residue chain is Chaperone protein HscA (616 aa).

It belongs to the heat shock protein 70 family.

In terms of biological role, chaperone involved in the maturation of iron-sulfur cluster-containing proteins. Has a low intrinsic ATPase activity which is markedly stimulated by HscB. Involved in the maturation of IscU. The protein is Chaperone protein HscA of Escherichia coli O7:K1 (strain IAI39 / ExPEC).